Here is a 36-residue protein sequence, read N- to C-terminus: Conotoxin Bu21 (36 aa).

Residues 1–21 constitute a propeptide that is removed on maturation; that stretch reads DGANAEATDNKPGVFERDEKK. 2 cysteine pairs are disulfide-bonded: Cys22–Cys28 and Cys23–Cys34.

Belongs to the conotoxin A superfamily. Expressed by the venom duct.

It localises to the secreted. The protein is Conotoxin Bu21 of Conus bullatus (Bubble cone).